A 224-amino-acid chain; its full sequence is BOS complex subunit TMEM147 (224 aa).

The chain crosses the membrane as a helical span at residues 1–21 (MTLFHFGNCFALAYFPYFITY). Residues 22 to 34 (KCSGLSEYNAFWK) lie on the Cytoplasmic side of the membrane. The chain crosses the membrane as a helical span at residues 35 to 58 (CVQAGVTYLFVQLCKMLFLATFFP). At 59–66 (TWEGGIYD) the chain is on the lumenal side. The chain crosses the membrane as a helical span at residues 67 to 88 (FIGEFMKASVDVADLIGLNLVM). The Cytoplasmic portion of the chain corresponds to 89 to 98 (SRNAGKGEYK). A helical membrane pass occupies residues 99–124 (IMVAALGWATAELIMSRCIPLWVGAR). Residues 125-129 (GIEFD) lie on the Lumenal side of the membrane. Residues 130 to 155 (WKYIQMSIDSNISLVHYIVASAQVWM) traverse the membrane as a helical segment. At 156–164 (ITRYDLYHT) the chain is on the cytoplasmic side. Residues 165–187 (FRPAVLLLMFLSVYKAFVMETFV) traverse the membrane as a helical segment. The Lumenal segment spans residues 188-194 (HLCSLGS). The chain crosses the membrane as a helical span at residues 195–216 (WTALLARAVVTGLLALSTLALY). Topologically, residues 217-224 (VAVVNVHS) are cytoplasmic.

This sequence belongs to the TMEM147 family. As to quaternary structure, component of the back of Sec61 (BOS) complex, composed of NCLN/Nicalin, NOMO1 and TMEM147. The BOS complex is part of the multi-pass translocon (MPT) complex, composed of three subcomplexes, the GEL complex (composed of RAB5IF/OPTI and TMCO1), the BOS complex (composed of NCLN/Nicalin, NOMO1 and TMEM147) and the PAT complex (composed of WDR83OS/Asterix and CCDC47). The MPT complex associates with the SEC61 complex. Interacts with CHRM3, CHRM1 and AVPR2. Interacts with LBR; promoting LBR localization to the nucleus inner membrane. Interacts with DHCR7.

The protein localises to the endoplasmic reticulum membrane. Its subcellular location is the nucleus membrane. It localises to the cell membrane. Functionally, component of the multi-pass translocon (MPT) complex that mediates insertion of multi-pass membrane proteins into the lipid bilayer of membranes. The MPT complex takes over after the SEC61 complex: following membrane insertion of the first few transmembrane segments of proteins by the SEC61 complex, the MPT complex occludes the lateral gate of the SEC61 complex to promote insertion of subsequent transmembrane regions. Also acts as a negative regulator of CHRM3 function, most likely by interfering with its trafficking to the cell membrane. Negatively regulates CHRM3-mediated calcium mobilization and activation of RPS6KA1/p90RSK activity. Regulates LBR localization to the nucleus inner membrane. The chain is BOS complex subunit TMEM147 from Canis lupus familiaris (Dog).